Reading from the N-terminus, the 672-residue chain is Spermatid perinuclear RNA-binding protein (672 aa).

The DZF domain occupies 5–363 (RSFANDDRHV…ALKRPFEDGL (359 aa)). Disordered stretches follow at residues 52 to 73 (TNKG…GENY) and 349 to 371 (GAGS…DPNK). Residues 357–371 (RPFEDGLGDDKDPNK) are compositionally biased toward basic and acidic residues. One can recognise a DRBM 1 domain in the interval 387-453 (DLMNALMRLN…AVKVLQAMGY (67 aa)). Residues 466 to 476 (SDEKSDNESKN) show a composition bias toward basic and acidic residues. The tract at residues 466 to 499 (SDEKSDNESKNETVSSNSSNNTGNSTTETSSTLE) is disordered. Residues 477-497 (ETVSSNSSNNTGNSTTETSST) show a composition bias toward low complexity. Positions 510–576 (SGKNPVMELN…ALAALEKLFS (67 aa)) constitute a DRBM 2 domain. Asymmetric dimethylarginine is present on residues R612 and R617.

As to quaternary structure, interacts with EIF2AK2. Associates with microtubules; it is unsure whether such interaction is direct or indirect.

Its subcellular location is the cytoplasm. In terms of biological role, involved in spermatogenesis and sperm function. Plays a role in regulation of cell growth. Binds to double-stranded DNA and RNA. Binds most efficiently to poly(I:C) RNA than to poly(dI:dC) DNA. Binds also to single-stranded poly(G) RNA. Binds non-specifically to the mRNA PRM1 3'-UTR and adenovirus VA RNA. This Pongo abelii (Sumatran orangutan) protein is Spermatid perinuclear RNA-binding protein (STRBP).